The sequence spans 738 residues: Leucine-rich repeat flightless-interacting protein 1 (738 aa).

N-acetylthreonine is present on T2. A Phosphoserine modification is found at S16. Over residues 40 to 65 (IRMKELERQQKEVEERPDKDFAEKGS) the composition is skewed to basic and acidic residues. Residues 40-98 (IRMKELERQQKEVEERPDKDFAEKGSRNMPSLSAATLASLGGTSSRRGSGDTSISMDTE) form a disordered region. Residues 78 to 94 (SLGGTSSRRGSGDTSIS) show a composition bias toward low complexity. A phosphoserine mark is found at S83, S84, S88, and S92. Residues 94–194 (SMDTEASIRE…LRQREEMLEK (101 aa)) adopt a coiled-coil conformation. K249 participates in a covalent cross-link: Glycyl lysine isopeptide (Lys-Gly) (interchain with G-Cter in SUMO1). 2 stretches are compositionally biased toward basic and acidic residues: residues 253–262 (VEKVGQRETL) and 277–297 (DCVDRGVLHPGEKAENQRPVE). Residues 253 to 738 (VEKVGQRETL…SKSKEDCTMS (486 aa)) form a disordered region. At S302 the chain carries Phosphoserine. Residues 314–326 (EVQSQDQENTSIL) show a composition bias toward polar residues. A compositionally biased stretch (basic and acidic residues) spans 330 to 347 (EQIESHEVTNKSDSRDSN). 2 positions are modified to phosphoserine: S346 and S348. Residues 371-380 (KNQSENSMDS) show a composition bias toward polar residues. 2 stretches are compositionally biased toward basic and acidic residues: residues 381 to 400 (QGKENQEDLGKGSFEPRPDH) and 467 to 476 (SERELAHEAA). Residues 479-580 (EEALTQSSQA…KNKKKKAAAP (102 aa)) are DNA-binding. 2 stretches are compositionally biased toward polar residues: residues 483–495 (TQSSQAGGENTVT) and 520–534 (TVQSGHQDTTGPGST). Residues 535–553 (DTKHTSPHAKERNKAKSEQ) are compositionally biased toward basic and acidic residues. S551 and S560 each carry phosphoserine. Residues 563-577 (KKTKNKKKKNKKKKA) are compositionally biased toward basic residues. A compositionally biased stretch (basic and acidic residues) spans 606–626 (RVQATDKKWAAETPELKEDPQ). S675 and S701 each carry phosphoserine. Composition is skewed to basic and acidic residues over residues 691 to 703 (QADEKGIEGHSVD) and 720 to 738 (EQAREEVGNSKSKEDCTMS).

The protein belongs to the LRRFIP family. Homodimer. May also form higher oligomers. Interacts with FLII. Interacts with MYD88. Competes with FLII for MyD88-binding, even in the absence of LPS.

It localises to the nucleus. The protein localises to the cytoplasm. Its function is as follows. Transcriptional repressor which preferentially binds to the GC-rich consensus sequence (5'-AGCCCCCGGCG-3') and may regulate expression of TNF, EGFR and PDGFA. May control smooth muscle cells proliferation following artery injury through PDGFA repression. May also bind double-stranded RNA. Positively regulates Toll-like receptor (TLR) signaling in response to agonist probably by competing with the negative FLII regulator for MYD88-binding. In Rattus norvegicus (Rat), this protein is Leucine-rich repeat flightless-interacting protein 1 (Lrrfip1).